Consider the following 721-residue polypeptide: 1,4-alpha-glucan branching enzyme GlgB (721 aa).

Asp-404 functions as the Nucleophile in the catalytic mechanism. Glu-457 serves as the catalytic Proton donor.

The protein belongs to the glycosyl hydrolase 13 family. GlgB subfamily. Monomer.

It carries out the reaction Transfers a segment of a (1-&gt;4)-alpha-D-glucan chain to a primary hydroxy group in a similar glucan chain.. Its pathway is glycan biosynthesis; glycogen biosynthesis. Catalyzes the formation of the alpha-1,6-glucosidic linkages in glycogen by scission of a 1,4-alpha-linked oligosaccharide from growing alpha-1,4-glucan chains and the subsequent attachment of the oligosaccharide to the alpha-1,6 position. The sequence is that of 1,4-alpha-glucan branching enzyme GlgB from Novosphingobium aromaticivorans (strain ATCC 700278 / DSM 12444 / CCUG 56034 / CIP 105152 / NBRC 16084 / F199).